We begin with the raw amino-acid sequence, 605 residues long: Elongation factor 4 (605 aa).

Positions alanine 5–lysine 187 constitute a tr-type G domain. GTP-binding positions include aspartate 17–threonine 22 and asparagine 134–aspartate 137.

This sequence belongs to the TRAFAC class translation factor GTPase superfamily. Classic translation factor GTPase family. LepA subfamily.

It localises to the cell inner membrane. The enzyme catalyses GTP + H2O = GDP + phosphate + H(+). In terms of biological role, required for accurate and efficient protein synthesis under certain stress conditions. May act as a fidelity factor of the translation reaction, by catalyzing a one-codon backward translocation of tRNAs on improperly translocated ribosomes. Back-translocation proceeds from a post-translocation (POST) complex to a pre-translocation (PRE) complex, thus giving elongation factor G a second chance to translocate the tRNAs correctly. Binds to ribosomes in a GTP-dependent manner. The polypeptide is Elongation factor 4 (Novosphingobium aromaticivorans (strain ATCC 700278 / DSM 12444 / CCUG 56034 / CIP 105152 / NBRC 16084 / F199)).